We begin with the raw amino-acid sequence, 261 residues long: Membrane protein insertase MisCA (261 aa).

The N-terminal stretch at 1–22 (MLLKRRIGLLLSMVGVFMLLAG) is a signal peptide. C23 carries N-palmitoyl cysteine lipidation. Residue C23 is the site of S-diacylglycerol cysteine attachment. 5 helical membrane passes run 61–81 (YGLS…PLMI), 131–151 (LAGC…YHAI), 174–194 (YILP…MMAG), 204–224 (MMLW…PAAL), and 225–245 (SLYW…IKGP).

This sequence belongs to the OXA1/ALB3/YidC family. Type 2 subfamily. In terms of assembly, mostly monomeric, it may also form dimers. Interacts with SpoIIIAE. Forms a complex with the F(1)F(0) ATP synthase in which can be found the alpha, beta, gamma, delta and epsilon subunits of F(1) and a, b and subunits of F(0). YqgA is found in the same complex.

It localises to the cell membrane. Functionally, required for the insertion and/or proper folding and/or complex formation of integral membrane proteins into the membrane. Involved in integration of membrane proteins that insert both dependently and independently of the Sec translocase complex, as well as at least some lipoproteins. Also involved in protein secretion processes. Essential for sporulation by activating sigma factor SpoIIIG/SigG after engulfment is completed in the prespore, maybe by acting on SpoIIIAE. It has an overlapping, although partly distinct, function compared to YqjG(MisCB). The polypeptide is Membrane protein insertase MisCA (misCA) (Bacillus subtilis (strain 168)).